Consider the following 282-residue polypeptide: Nucleotide-binding protein Ping_2894 (282 aa).

8 to 15 is a binding site for ATP; it reads GRSGSGKT. 56–59 provides a ligand contact to GTP; it reads DIRN.

This sequence belongs to the RapZ-like family.

Functionally, displays ATPase and GTPase activities. This chain is Nucleotide-binding protein Ping_2894, found in Psychromonas ingrahamii (strain DSM 17664 / CCUG 51855 / 37).